The sequence spans 84 residues: U4-theraphotoxin-Hhn1a (84 aa).

A signal peptide spans methionine 1–alanine 22. Residues glutamate 23–arginine 47 constitute a propeptide that is removed on maturation. Intrachain disulfides connect cysteine 51-cysteine 65, cysteine 55-cysteine 76, and cysteine 70-cysteine 81.

It belongs to the neurotoxin 12 (Hwtx-2) family. 02 (Hwtx-2) subfamily. As to expression, expressed by the venom gland.

The protein resides in the secreted. Functionally, postsynaptic neurotoxin. This is U4-theraphotoxin-Hhn1a from Cyriopagopus hainanus (Chinese bird spider).